Consider the following 60-residue polypeptide: Small ribosomal subunit protein eS31 (60 aa).

Residues Cys27, Cys30, Cys45, and Cys48 each contribute to the Zn(2+) site. The C4-type zinc finger occupies 27–48 (CPRCGPGVFMAEHLNRYACGKC).

This sequence belongs to the eukaryotic ribosomal protein eS31 family. In terms of assembly, part of the 30S ribosomal subunit. Zn(2+) is required as a cofactor.

The sequence is that of Small ribosomal subunit protein eS31 from Methanocaldococcus jannaschii (strain ATCC 43067 / DSM 2661 / JAL-1 / JCM 10045 / NBRC 100440) (Methanococcus jannaschii).